The following is a 443-amino-acid chain: EGF-containing fibulin-like extracellular matrix protein 2 (443 aa).

The N-terminal stretch at 1-23 is a signal peptide; that stretch reads MLPCASCLPGSLLLWALLLLLLG. The region spanning 36-81 is the EGF-like 1; atypical domain; the sequence is YTECTDGYEWDPDSQHCRDVNECLTIPEACKGEMKCINHYGGYLCL. 18 cysteine pairs are disulfide-bonded: Cys-58/Cys-121, Cys-65/Cys-80, Cys-71/Cys-109, Cys-127/Cys-140, Cys-134/Cys-149, Cys-151/Cys-162, Cys-168/Cys-177, Cys-173/Cys-186, Cys-188/Cys-201, Cys-207/Cys-217, Cys-213/Cys-226, Cys-228/Cys-241, Cys-247/Cys-258, Cys-254/Cys-267, Cys-269/Cys-281, Cys-287/Cys-300, Cys-294/Cys-309, and Cys-315/Cys-327. The 41-residue stretch at 123 to 163 folds into the EGF-like 2; calcium-binding domain; the sequence is DVDECAQALHDCRPSQDCHNLPGSYQCTCPDGYRKIGPECV. The EGF-like 3; calcium-binding domain maps to 164–202; sequence DIDECRYRYCQHRCVNLPGSFRCQCEPGFQLGPNNRSCV. Asn-198 carries an N-linked (GlcNAc...) asparagine glycan. The 40-residue stretch at 203-242 folds into the EGF-like 4; calcium-binding domain; that stretch reads DVNECDMGAPCEQRCFNSYGTFLCRCHQGYELHRDGFSCS. The region spanning 243–282 is the EGF-like 5; calcium-binding domain; sequence DIDECSYSSYLCQYRCINEPGRFSCHCPQGYQLLATRLCQ. In terms of domain architecture, EGF-like 6; calcium-binding spans 283–328; it reads DIDECESGAHQCSEAQTCVNFHGGYRCVDTNRCVEPYIQVSENRCL. An N-linked (GlcNAc...) asparagine glycan is attached at Asn-394.

This sequence belongs to the fibulin family. In terms of assembly, homodimer; disulfide-linked. Multimer; allows heparin binding. Monomer. Interacts with FBN1 (via N-terminal domain); this interaction inhibits EFEMP2 binding to LOX and ELN. Interacts with LOX (via propeptide); this interaction is strong and facilitates formation of ternary complexes with ELN during elastic fiber assembly; this interaction limits interaction of EFEMP2 with FBLN5. Interacts with PITX2. Interacts with ELN with moderate affinity; this interaction regulates ELN self-assembly maturation stage. Interacts with FBLN5 with moderate affinity. Interacts with LOXL1 (via propeptide), LTBP1 and TGFB1 stronger than with LOXL2 and LTBP3. Interacts with PCOLCE. Interacts with collagen type IV trimer (COL4A1-COL4A1-COL4A2), NID2 and moderately with COL15A1-derived endostatin. Interacts with EMILIN1; this interaction promotes the incorporation of EFEMP2 into the extracellular matrix. Interacts with LTBP4; the LTBP4 long form (LTBP4L) has a stronger binding affinity than the LTBP4 short form and the LTBP4 long form promotes fibrillar deposition of EFEMP2. Post-translationally, N-glycosylated; contains mostly complex-type glycans. Not O-glycosylated. In terms of processing, cleaved by ELANE; produces a 50-55 kDa fragment. Cleaved by MMP2 and MMP9; produces several fragments.

It is found in the secreted. The protein localises to the extracellular space. Its subcellular location is the extracellular matrix. It localises to the basement membrane. Functionally, plays a crucial role in elastic fiber formation in tissue, and in the formation of ultrastructural connections between elastic laminae and smooth muscle cells in the aorta, therefore participates in terminal differentiation and maturation of smooth muscle cell (SMC) and in the mechanical properties and wall integrity maintenance of the aorta. In addition, is involved in the control of collagen fibril assembly in tissue throught proteolytic activation of LOX leading to cross- linking of collagen and elastin. Also promotes ELN coacervation and participates in the deposition of ELN coacervates on to microfibrils but also regulates ELN cross- linking through LOX interaction. Moreover adheres to the cells through heparin binding in a calcium-dependent manner and regulates vascularlar smooth muscle cells proliferation through angiotensin signaling. This Homo sapiens (Human) protein is EGF-containing fibulin-like extracellular matrix protein 2.